The following is a 106-amino-acid chain: UPF0145 protein PP_2873 (106 aa).

It belongs to the UPF0145 family.

This Pseudomonas putida (strain ATCC 47054 / DSM 6125 / CFBP 8728 / NCIMB 11950 / KT2440) protein is UPF0145 protein PP_2873.